Consider the following 709-residue polypeptide: Phosphoribosylformylglycinamidine synthase subunit PurL (709 aa).

His36 is a catalytic residue. ATP contacts are provided by Tyr39 and Lys80. Position 82 (Glu82) interacts with Mg(2+). Substrate is bound by residues 83-86 (SHNH) and Arg105. His84 functions as the Proton acceptor in the catalytic mechanism. Asp106 contacts Mg(2+). Position 226 (Gln226) interacts with substrate. Mg(2+) is bound at residue Asp252. 294–296 (ETQ) is a substrate binding site. Residues Asp470 and Gly507 each contribute to the ATP site. Substrate is bound at residue Ser510.

Belongs to the FGAMS family. As to quaternary structure, monomer. Part of the FGAM synthase complex composed of 1 PurL, 1 PurQ and 2 PurS subunits.

The protein resides in the cytoplasm. It catalyses the reaction N(2)-formyl-N(1)-(5-phospho-beta-D-ribosyl)glycinamide + L-glutamine + ATP + H2O = 2-formamido-N(1)-(5-O-phospho-beta-D-ribosyl)acetamidine + L-glutamate + ADP + phosphate + H(+). It functions in the pathway purine metabolism; IMP biosynthesis via de novo pathway; 5-amino-1-(5-phospho-D-ribosyl)imidazole from N(2)-formyl-N(1)-(5-phospho-D-ribosyl)glycinamide: step 1/2. Functionally, part of the phosphoribosylformylglycinamidine synthase complex involved in the purines biosynthetic pathway. Catalyzes the ATP-dependent conversion of formylglycinamide ribonucleotide (FGAR) and glutamine to yield formylglycinamidine ribonucleotide (FGAM) and glutamate. The FGAM synthase complex is composed of three subunits. PurQ produces an ammonia molecule by converting glutamine to glutamate. PurL transfers the ammonia molecule to FGAR to form FGAM in an ATP-dependent manner. PurS interacts with PurQ and PurL and is thought to assist in the transfer of the ammonia molecule from PurQ to PurL. In Saccharolobus solfataricus (strain ATCC 35092 / DSM 1617 / JCM 11322 / P2) (Sulfolobus solfataricus), this protein is Phosphoribosylformylglycinamidine synthase subunit PurL.